Here is a 726-residue protein sequence, read N- to C-terminus: Beta-glucosidase cel3A (726 aa).

Residues 1-20 (MASRLVAGLQVLALAGTATA) form the signal peptide. N-linked (GlcNAc...) asparagine glycosylation is found at asparagine 223 and asparagine 592.

It belongs to the glycosyl hydrolase 3 family.

It localises to the secreted. It carries out the reaction Hydrolysis of terminal, non-reducing beta-D-glucosyl residues with release of beta-D-glucose.. The protein operates within glycan metabolism; cellulose degradation. Functionally, beta-glucosidases are one of a number of cellulolytic enzymes involved in the degradation of cellulosic biomass. Catalyzes the last step releasing glucose from the inhibitory cellobiose. Has a broad substrate specificity but preferentially hydrolyzes highly polymerized 1,3- and 1,4-beta-glucans. The polypeptide is Beta-glucosidase cel3A (Pyricularia oryzae (strain 70-15 / ATCC MYA-4617 / FGSC 8958) (Rice blast fungus)).